Consider the following 628-residue polypeptide: Kinesin-like protein tea2 (628 aa).

The segment at 2-122 (SSSSSKPVNT…TTSQQTNSKG (121 aa)) is interaction with mal3. A Phosphoserine modification is found at Ser-82. A Kinesin motor domain is found at 132–460 (GIITSIRIRP…LKFASRAQNL (329 aa)). 218–225 (GMTGTGKT) contacts ATP. A coiled-coil region spans residues 530–557 (LRMEELLSDHNFEIADLRDELQDKEQII). A disordered region spans residues 588-628 (VTRGSRSSSDQFSNETKTEILPDDQQQSKKDSVTQETQLLS). Over residues 589–602 (TRGSRSSSDQFSNE) the composition is skewed to polar residues. A compositionally biased stretch (basic and acidic residues) spans 603–620 (TKTEILPDDQQQSKKDSV).

Belongs to the TRAFAC class myosin-kinesin ATPase superfamily. Kinesin family. As to quaternary structure, interacts with mal3 and tip1.

It is found in the cytoplasm. The protein resides in the cytoskeleton. Its function is as follows. Promotes microtubule growth, possibly through interactions with the microtubule end, and is important for establishing and maintaining polarized growth along the long axis of the cell. Acts as a kinesin motor protein that moves along microtubules and is required for proper localization of tea1 and tip1 to the cell tips and microtubules, respectively. ATPase activity stimulated via interaction with mal3. This Schizosaccharomyces pombe (strain 972 / ATCC 24843) (Fission yeast) protein is Kinesin-like protein tea2.